A 463-amino-acid chain; its full sequence is Dipeptidyl peptidase 1 (463 aa).

Positions 1 to 24 are cleaved as a signal peptide; the sequence is MGVGPASLLAALLLLLSGDRAVRC. N-linked (GlcNAc...) asparagine glycosylation is found at Asn-29, Asn-53, and Asn-119. Intrachain disulfides connect Cys-30–Cys-118, Cys-54–Cys-136, Cys-255–Cys-298, Cys-291–Cys-331, and Cys-321–Cys-337. Residues 135–230 constitute a propeptide that is removed on maturation; it reads ACFTGKKVGT…TAEIQQKILH (96 aa). Cys-258 is a catalytic residue. An N-linked (GlcNAc...) asparagine glycan is attached at Asn-276. Chloride contacts are provided by Phe-302 and Tyr-304. Tyr-347 contributes to the chloride binding site. Catalysis depends on residues His-405 and Asn-427.

This sequence belongs to the peptidase C1 family. As to quaternary structure, tetramer of heterotrimers consisting of exclusion domain, heavy- and light chains. The cofactor is chloride.

It is found in the lysosome. It catalyses the reaction Release of an N-terminal dipeptide, Xaa-Yaa-|-Zaa-, except when Xaa is Arg or Lys, or Yaa or Zaa is Pro.. Functionally, thiol protease. Has dipeptidylpeptidase activity. Active against a broad range of dipeptide substrates composed of both polar and hydrophobic amino acids. Proline cannot occupy the P1 position and arginine cannot occupy the P2 position of the substrate. Can act as both an exopeptidase and endopeptidase. Activates serine proteases such as elastase, cathepsin G and granzymes A and B. The polypeptide is Dipeptidyl peptidase 1 (CTSC) (Macaca fascicularis (Crab-eating macaque)).